Consider the following 223-residue polypeptide: Serum amyloid P-component (223 aa).

A signal peptide spans 1 to 19 (MDKMLFWVSVFTIFLDVFA). Residues 24 to 223 (DKKVFVFPRE…YVIIKPRVWD (200 aa)) enclose the Pentraxin (PTX) domain. Cysteines 55 and 114 form a disulfide. Residues Asp77, Asn78, Glu155, Gln156, Asp157, and Gln167 each contribute to the Ca(2+) site. Asn198 carries an N-linked (GlcNAc...) asparagine glycan.

This sequence belongs to the pentraxin family. Homopentamer. Pentraxin (or pentaxin) have a discoid arrangement of 5 non-covalently bound subunits. Requires Ca(2+) as cofactor.

The protein resides in the secreted. The sequence is that of Serum amyloid P-component (PTX2) from Cavia porcellus (Guinea pig).